The chain runs to 635 residues: Elongation factor 4 (635 aa).

The tr-type G domain occupies 11 to 193; that stretch reads EKIRNFSIIA…QIVEKVPAPT (183 aa). GTP-binding positions include 23–28 and 140–143; these read DHGKST and NKID.

It belongs to the TRAFAC class translation factor GTPase superfamily. Classic translation factor GTPase family. LepA subfamily.

Its subcellular location is the cell membrane. It catalyses the reaction GTP + H2O = GDP + phosphate + H(+). In terms of biological role, required for accurate and efficient protein synthesis under certain stress conditions. May act as a fidelity factor of the translation reaction, by catalyzing a one-codon backward translocation of tRNAs on improperly translocated ribosomes. Back-translocation proceeds from a post-translocation (POST) complex to a pre-translocation (PRE) complex, thus giving elongation factor G a second chance to translocate the tRNAs correctly. Binds to ribosomes in a GTP-dependent manner. The chain is Elongation factor 4 from Streptococcus pyogenes serotype M12 (strain MGAS2096).